The chain runs to 454 residues: UDP-N-acetylmuramoylalanine--D-glutamate ligase (454 aa).

An ATP-binding site is contributed by Gly-114 to Thr-120.

Belongs to the MurCDEF family.

Its subcellular location is the cytoplasm. It carries out the reaction UDP-N-acetyl-alpha-D-muramoyl-L-alanine + D-glutamate + ATP = UDP-N-acetyl-alpha-D-muramoyl-L-alanyl-D-glutamate + ADP + phosphate + H(+). It participates in cell wall biogenesis; peptidoglycan biosynthesis. Functionally, cell wall formation. Catalyzes the addition of glutamate to the nucleotide precursor UDP-N-acetylmuramoyl-L-alanine (UMA). In Desulfitobacterium hafniense (strain DSM 10664 / DCB-2), this protein is UDP-N-acetylmuramoylalanine--D-glutamate ligase.